Consider the following 273-residue polypeptide: 4-hydroxy-tetrahydrodipicolinate reductase (273 aa).

NAD(+)-binding positions include 11-16 (GATGKM) and 106-108 (GTT). Residue histidine 162 is the Proton donor/acceptor of the active site. Histidine 163 contacts (S)-2,3,4,5-tetrahydrodipicolinate. Lysine 166 acts as the Proton donor in catalysis. 172-173 (GT) provides a ligand contact to (S)-2,3,4,5-tetrahydrodipicolinate.

Belongs to the DapB family.

The protein resides in the cytoplasm. It catalyses the reaction (S)-2,3,4,5-tetrahydrodipicolinate + NAD(+) + H2O = (2S,4S)-4-hydroxy-2,3,4,5-tetrahydrodipicolinate + NADH + H(+). The catalysed reaction is (S)-2,3,4,5-tetrahydrodipicolinate + NADP(+) + H2O = (2S,4S)-4-hydroxy-2,3,4,5-tetrahydrodipicolinate + NADPH + H(+). Its pathway is amino-acid biosynthesis; L-lysine biosynthesis via DAP pathway; (S)-tetrahydrodipicolinate from L-aspartate: step 4/4. In terms of biological role, catalyzes the conversion of 4-hydroxy-tetrahydrodipicolinate (HTPA) to tetrahydrodipicolinate. The chain is 4-hydroxy-tetrahydrodipicolinate reductase from Synechococcus sp. (strain ATCC 27144 / PCC 6301 / SAUG 1402/1) (Anacystis nidulans).